The chain runs to 206 residues: Histidine biosynthesis bifunctional protein HisIE (206 aa).

Residues 1–117 (MGSETTAAGD…SCFPTAPSQF (117 aa)) are phosphoribosyl-AMP cyclohydrolase. The phosphoribosyl-ATP pyrophosphohydrolase stretch occupies residues 118 to 206 (LGSLDALIAE…AVALLESRHK (89 aa)).

It in the N-terminal section; belongs to the PRA-CH family. This sequence in the C-terminal section; belongs to the PRA-PH family.

Its subcellular location is the cytoplasm. It carries out the reaction 1-(5-phospho-beta-D-ribosyl)-ATP + H2O = 1-(5-phospho-beta-D-ribosyl)-5'-AMP + diphosphate + H(+). The enzyme catalyses 1-(5-phospho-beta-D-ribosyl)-5'-AMP + H2O = 1-(5-phospho-beta-D-ribosyl)-5-[(5-phospho-beta-D-ribosylamino)methylideneamino]imidazole-4-carboxamide. The protein operates within amino-acid biosynthesis; L-histidine biosynthesis; L-histidine from 5-phospho-alpha-D-ribose 1-diphosphate: step 2/9. It participates in amino-acid biosynthesis; L-histidine biosynthesis; L-histidine from 5-phospho-alpha-D-ribose 1-diphosphate: step 3/9. This chain is Histidine biosynthesis bifunctional protein HisIE, found in Xanthomonas campestris pv. campestris (strain ATCC 33913 / DSM 3586 / NCPPB 528 / LMG 568 / P 25).